Here is a 227-residue protein sequence, read N- to C-terminus: Transmembrane emp24 domain-containing protein 1 (227 aa).

Residues 1–24 (MMAAGAAVALALWLLLPAVGVGEA) form the signal peptide. Residues 25–194 (GPPPIQDGEF…LQEDNLERVN (170 aa)) are Extracellular-facing. Residues 43 to 125 (KQCFYQSAPA…EKLVFFELIF (83 aa)) form the GOLD domain. The stretch at 145-170 (EMLDVKMEDIKESIETMRTRLERSIQ) forms a coiled coil. A helical membrane pass occupies residues 195–215 (FWSAANVAVLLLVAVLQVCTL). Residues 216–227 (KRFFHDKRPVPT) lie on the Cytoplasmic side of the membrane. The COPII vesicle coat-binding motif lies at 218-219 (FF). The COPI vesicle coat-binding motif lies at 218–227 (FFHDKRPVPT).

The protein belongs to the EMP24/GP25L family. In terms of assembly, homodimer in endoplasmic reticulum, endoplasmic reticulum-Golgi intermediate compartment and cis-Golgi network. Interacts with IL1RL1. Interacts with RNF26; this interaction is important to modulate innate immune signaling through the cGAS-STING pathway. In terms of tissue distribution, widely expressed.

The protein localises to the cell membrane. It is found in the endoplasmic reticulum membrane. Its subcellular location is the golgi apparatus. The protein resides in the cis-Golgi network membrane. It localises to the endoplasmic reticulum-Golgi intermediate compartment membrane. In terms of biological role, potential role in vesicular protein trafficking, mainly in the early secretory pathway. May act as a cargo receptor at the lumenal side for incorporation of secretory cargo molecules into transport vesicles and may be involved in vesicle coat formation at the cytoplasmic side. Plays a positive role in IL-33-mediated IL-8 and IL-6 production by interacting with interleukin-33 receptor IL1RL1. Plays also a role in the modulation of innate immune signaling through the cGAS-STING pathway by interacting with RNF26. This Mus musculus (Mouse) protein is Transmembrane emp24 domain-containing protein 1 (Tmed1).